A 479-amino-acid polypeptide reads, in one-letter code: Alpha,alpha-trehalose-phosphate synthase [UDP-forming] 2 (479 aa).

Positions 96 and 150 each coordinate D-glucose 6-phosphate. Residues arginine 287 and lysine 292 each coordinate UDP. Residues arginine 287 and lysine 292 each contribute to the UDP-alpha-D-glucose site. Position 325 (arginine 325) interacts with D-glucose 6-phosphate. Residues 363 to 364 and 390 to 394 each bind UDP; these read SV and LVSFE. 386 to 394 contributes to the UDP-alpha-D-glucose binding site; the sequence is DGMNLVSFE.

It belongs to the glycosyltransferase 20 family.

It carries out the reaction D-glucose 6-phosphate + UDP-alpha-D-glucose = alpha,alpha-trehalose 6-phosphate + UDP + H(+). It participates in carbohydrate biosynthesis. Its function is as follows. Synthase catalytic subunit of the trehalose synthase complex that catalyzes the production of trehalose from glucose-6-phosphate and UDP-alpha-D-glucose in a two step process. The disaccharide trehalose serves as a storage carbohydrate that is mobilized during conidial germination. Regulates the level of trehalose as a protectant for cell integrity during thermal and oxidative stress. The chain is Alpha,alpha-trehalose-phosphate synthase [UDP-forming] 2 from Aspergillus fumigatus (strain ATCC MYA-4609 / CBS 101355 / FGSC A1100 / Af293) (Neosartorya fumigata).